The following is a 241-amino-acid chain: Glutathione S-transferase omega-1 (241 aa).

The residue at position 2 (S2) is an N-acetylserine. The 80-residue stretch at 22–101 folds into the GST N-terminal domain; the sequence is GQIRVYSMRF…YLDEAYPEKK (80 aa). Residue C32 is the Nucleophile of the active site. The residue at position 57 (K57) is an N6-acetyllysine. Residues K59, V72, and 85–86 each bind glutathione; that span reads ES. The GST C-terminal domain maps to 106 to 228; that stretch reads DPYEKACQKM…AKTYRDYLSL (123 aa). S129 is modified (phosphoserine). 3 positions are modified to N6-acetyllysine: K143, K148, and K152.

Belongs to the GST superfamily. Omega family. In terms of assembly, homodimer.

The protein localises to the cytoplasm. Its subcellular location is the cytosol. It carries out the reaction RX + glutathione = an S-substituted glutathione + a halide anion + H(+). The enzyme catalyses L-dehydroascorbate + 2 glutathione = glutathione disulfide + L-ascorbate. The catalysed reaction is methylarsonate + 2 glutathione + H(+) = methylarsonous acid + glutathione disulfide + H2O. In terms of biological role, exhibits glutathione-dependent thiol transferase and dehydroascorbate reductase activities. Has S-(phenacyl)glutathione reductase activity. Also has glutathione S-transferase activity. Participates in the biotransformation of inorganic arsenic and reduces monomethylarsonic acid (MMA) and dimethylarsonic acid. The protein is Glutathione S-transferase omega-1 (Gsto1) of Rattus norvegicus (Rat).